The primary structure comprises 543 residues: Probable zinc transporter protein DDB_G0283629 (543 aa).

The disordered stretch occupies residues 1 to 175 (MENFKNNELE…EESKPLNQLR (175 aa)). Residues 1 to 186 (MENFKNNELE…LDSKKKARYS (186 aa)) are Cytoplasmic-facing. 2 stretches are compositionally biased toward low complexity: residues 11 to 26 (SSPI…SINN) and 41 to 55 (NNNN…NSHI). Basic and acidic residues-rich tracts occupy residues 56–66 (NNHDHKHNHEH) and 76–104 (HNHD…EHNV). Over residues 105-116 (GNKNLLTNNNNQ) the composition is skewed to low complexity. Residues 130-140 (EDGSSSGGGGG) are compositionally biased toward gly residues. Residues 187-207 (LILALTLTTIFMVGEIVGGYF) form a helical membrane-spanning segment. Topologically, residues 208–216 (ANSLAIMTD) are extracellular. A helical transmembrane segment spans residues 217-237 (AAHLLTDIGAMFLSLFAMWIS). Residues 238-251 (QHPPTSSMSFGFHR) lie on the Cytoplasmic side of the membrane. Residues 252–272 (AEILGALVSVLMIWALTGVLV) form a helical membrane-spanning segment. The Extracellular segment spans residues 273–289 (YEAIQRILYPPDAVDGK). Residues 290–310 (IMFIIASCGLFINIIDAIILH) form a helical membrane-spanning segment. Topologically, residues 311-375 (WGSGGHGHSH…VRNINVHSAY (65 aa)) are cytoplasmic. The tract at residues 319–342 (SHGGGHGHSHGIGGGTQKKKSKKN) is disordered. A helical transmembrane segment spans residues 376-396 (IHVLGDCFQSIGVMVASCIIW). Residues 397–402 (VHPHWK) lie on the Extracellular side of the membrane. A helical membrane pass occupies residues 403 to 423 (IADPITTLIFSVIVLGTTIKL). Residues 424 to 543 (LRESLGVLME…NDNLSSPPNQ (120 aa)) are Cytoplasmic-facing. The disordered stretch occupies residues 516-543 (KCKDHSCPPPKPKKKKIKNDNLSSPPNQ).

The protein belongs to the cation diffusion facilitator (CDF) transporter (TC 2.A.4) family. SLC30A subfamily.

It localises to the membrane. Functionally, may be involved in zinc transport from the cytoplasm to either intracellular organelles or extracellular spaces. In Dictyostelium discoideum (Social amoeba), this protein is Probable zinc transporter protein DDB_G0283629.